The following is a 295-amino-acid chain: 5,10-methylenetetrahydrofolate reductase (295 aa).

The Proton donor/acceptor role is filled by E28. T59 contributes to the NADH binding site. H89, R119, G120, D121, A133, Y153, H157, A160, D166, N169, R172, and K173 together coordinate FAD. D121 serves as a coordination point for (6S)-5-methyl-5,6,7,8-tetrahydrofolate. Q184 serves as a coordination point for NADH. Residues Q184, Q220, and K280 each contribute to the (6S)-5-methyl-5,6,7,8-tetrahydrofolate site.

Belongs to the methylenetetrahydrofolate reductase family. FAD is required as a cofactor.

It catalyses the reaction (6S)-5-methyl-5,6,7,8-tetrahydrofolate + NAD(+) = (6R)-5,10-methylene-5,6,7,8-tetrahydrofolate + NADH + H(+). It functions in the pathway one-carbon metabolism; tetrahydrofolate interconversion. It participates in amino-acid biosynthesis; L-methionine biosynthesis via de novo pathway. Functionally, catalyzes the NADH-dependent reduction of 5,10-methylenetetrahydrofolate to 5-methyltetrahydrofolate. Is required to provide the methyl group necessary for methionine synthetase to convert homocysteine to methionine; the methyl group is given by 5-methyltetrahydrofolate. The polypeptide is 5,10-methylenetetrahydrofolate reductase (metF) (Buchnera aphidicola subsp. Baizongia pistaciae (strain Bp)).